The chain runs to 362 residues: Outer membrane porin protein OmpD (362 aa).

The first 21 residues, 1 to 21, serve as a signal peptide directing secretion; it reads MKLKLVAVAVTSLLAAGVVNA.

The protein belongs to the Gram-negative porin family. As to quaternary structure, homotrimer.

The protein localises to the cell outer membrane. Its function is as follows. Forms pores that allow passive diffusion of small molecules across the outer membrane. The sequence is that of Outer membrane porin protein OmpD (ompD) from Salmonella choleraesuis (strain SC-B67).